We begin with the raw amino-acid sequence, 3214 residues long: Ciliogenesis and planar polarity effector 1 (3214 aa).

2 consecutive transmembrane segments (helical) span residues 593 to 613 (KLMLNYTILCITHFFYILQFI) and 632 to 652 (AWVLCVFQLFHQCLSVHYWDM). 11 disordered regions span residues 1496–1523 (VGKKPSDKKKVSNQKENSQRKEDDETPG), 1644–1667 (GNQSGSTLENPLQSGSTSENPLQS), 1879–1991 (DGRH…HRAQ), 2047–2142 (FGES…FPPA), 2214–2241 (SLSDSCQPPVSQRTVHTTLPSPSDSSHC), 2398–2440 (GITQ…ISND), 2491–2529 (GSHDASTNTDPDKEGPSQKADSESSKNPQATAASSGHEP), 2622–2650 (TFQSQESASSTRGLISEPAKVTQSCQSGE), 2824–2855 (VSLQTQEDVEEQKDAEETSETEFSEAENHSSQ), 3037–3127 (TAPA…CRED), and 3158–3181 (MSPADEEEPEPPLLAGGMDSVSES). The span at 1512–1523 (NSQRKEDDETPG) shows a compositional bias: basic and acidic residues. The segment covering 1932–1942 (QCSRKEPRDAS) has biased composition (basic and acidic residues). Composition is skewed to polar residues over residues 1943–1953 (VDTNLTEQKGA), 1971–1984 (NGAQDTSQTPQKTQ), and 2047–2068 (FGESQVSNSTKSDCIEVNSRQR). Over residues 2079–2099 (CTREPGKNSPADHKRISRPDQ) the composition is skewed to basic and acidic residues. Residues 2215-2241 (LSDSCQPPVSQRTVHTTLPSPSDSSHC) are compositionally biased toward polar residues. The segment covering 2500–2514 (DPDKEGPSQKADSES) has biased composition (basic and acidic residues). 2 stretches are compositionally biased toward polar residues: residues 2515–2524 (SKNPQATAAS) and 2622–2634 (TFQSQESASSTRG). Over residues 2830–2848 (EDVEEQKDAEETSETEFSE) the composition is skewed to acidic residues. Polar residues predominate over residues 3090 to 3107 (RGSSQLRGSQPPCQSQKP).

As to quaternary structure, interacts with FUZ; INTU and WDPCP; the interactors are proposed to form the core CPLANE (ciliogenesis and planar polarity effectors) complex.

It is found in the membrane. It localises to the cell projection. The protein localises to the cilium. Its function is as follows. Involved in ciliogenesis. Involved in the establishment of cell polarity required for directional cell migration. Proposed to act in association with the CPLANE (ciliogenesis and planar polarity effectors) complex. Involved in recruitment of peripheral IFT-A proteins to basal bodies. This Mus musculus (Mouse) protein is Ciliogenesis and planar polarity effector 1.